Here is a 249-residue protein sequence, read N- to C-terminus: MIIKVMTLFPEMFSGPLGNSIIQRAQENRILHIQCVNIRDYAENKHKKVDDYPFGGGPGMVMTPQPIVSCYESIVKEFQDKNHVEQPKVIYLSPKGKKFDQEMAERLSEENALILLCGHYEGIDQRVIDEIVTDEISIGDYVLTGGEIPAMVLIDAVARLIPGVLSQDASFEEESFYSGLLEYPQYTRPRVFRGRSVPDVLTSGNHSKIQEWRRNQSLELTFHRRPDLLKDFILTKKDQLFLEQIKSKK.

Residues G118 and 138 to 143 contribute to the S-adenosyl-L-methionine site; that span reads IGDYVL.

It belongs to the RNA methyltransferase TrmD family. As to quaternary structure, homodimer.

It is found in the cytoplasm. It carries out the reaction guanosine(37) in tRNA + S-adenosyl-L-methionine = N(1)-methylguanosine(37) in tRNA + S-adenosyl-L-homocysteine + H(+). Its function is as follows. Specifically methylates guanosine-37 in various tRNAs. In Alkaliphilus oremlandii (strain OhILAs) (Clostridium oremlandii (strain OhILAs)), this protein is tRNA (guanine-N(1)-)-methyltransferase.